A 206-amino-acid polypeptide reads, in one-letter code: MKLDRRLVIKILEEKIKSEGIVLGSDILKVNSFLNHQIDPFLMSQIGQAFAEKFSHENISKVLTIESSGIAPALMTSLQLQVPMIFARKHQSRTLNEEFFSASVYSYTKQTENQIAVSKRFINPGDRVLIIDDFLANGQAVQGLLDIINQAGASAVGVGIVIEKRFQAGHQLILSKNLPLVSLASIDRFEDGQVVFSKQGETSHVN.

2 residues coordinate xanthine: leucine 28 and asparagine 35. Position 136 to 140 (136 to 140 (ANGQA)) interacts with 5-phospho-alpha-D-ribose 1-diphosphate. Lysine 164 provides a ligand contact to xanthine.

Belongs to the purine/pyrimidine phosphoribosyltransferase family. Xpt subfamily. In terms of assembly, homodimer.

It localises to the cytoplasm. It carries out the reaction XMP + diphosphate = xanthine + 5-phospho-alpha-D-ribose 1-diphosphate. It participates in purine metabolism; XMP biosynthesis via salvage pathway; XMP from xanthine: step 1/1. Converts the preformed base xanthine, a product of nucleic acid breakdown, to xanthosine 5'-monophosphate (XMP), so it can be reused for RNA or DNA synthesis. This chain is Xanthine phosphoribosyltransferase, found in Oenococcus oeni (strain ATCC BAA-331 / PSU-1).